Consider the following 347-residue polypeptide: Beta-hexosaminidase (347 aa).

Substrate is bound by residues Asp-64, Arg-72, Arg-138, and 168 to 169; that span reads KH. Residue His-181 is the Proton donor/acceptor of the active site. Asp-251 acts as the Nucleophile in catalysis.

The protein belongs to the glycosyl hydrolase 3 family. NagZ subfamily.

Its subcellular location is the cytoplasm. The enzyme catalyses Hydrolysis of terminal non-reducing N-acetyl-D-hexosamine residues in N-acetyl-beta-D-hexosaminides.. The protein operates within cell wall biogenesis; peptidoglycan recycling. Plays a role in peptidoglycan recycling by cleaving the terminal beta-1,4-linked N-acetylglucosamine (GlcNAc) from peptide-linked peptidoglycan fragments, giving rise to free GlcNAc, anhydro-N-acetylmuramic acid and anhydro-N-acetylmuramic acid-linked peptides. The protein is Beta-hexosaminidase of Thioalkalivibrio sulfidiphilus (strain HL-EbGR7).